The sequence spans 950 residues: Protocadherin alpha-13 (950 aa).

The signal sequence occupies residues 1-29; sequence MLSSWQGGPRPRQLLLWLLILAAWETGSG. Over 30–697 the chain is Extracellular; sequence QLHYSVPEEA…GPEAALVDVN (668 aa). Cadherin domains follow at residues 34–133, 134–242, 243–350, 351–455, 456–565, and 581–678; these read SVPE…PPIF, PESK…APEF, YQSV…APEV, TITS…APAF, AQPE…APAL, and MPRS…APQA. 2 N-linked (GlcNAc...) asparagine glycosylation sites follow: N257 and N265. N548 is a glycosylation site (N-linked (GlcNAc...) asparagine). Residues 698–718 form a helical membrane-spanning segment; sequence VYLIIAICAVSSLLVLTLLLY. Residues 719–950 lie on the Cytoplasmic side of the membrane; sequence TALRCSAPPT…GNSTTDNSDQ (232 aa). 6 PXXP repeats span residues 734-737, 774-777, 799-802, 832-835, 873-876, and 891-894; these read PGKP, PSLP, PRQP, PGGP, PGNP, and PGSP. Residues 734 to 894 form a 6 X 4 AA repeats of P-X-X-P region; that stretch reads PGKPTLVCSS…PDKFIIPGSP (161 aa). 2 disordered regions span residues 774–808 and 827–950; these read PSLP…DWRY and ILRA…NSDQ. The span at 787–800 shows a compositional bias: basic and acidic residues; it reads GQREEDSEGLKEPR. The segment covering 909 to 923 has biased composition (basic and acidic residues); sequence DKSDFITFGKKEETK.

It is found in the cell membrane. Its function is as follows. Potential calcium-dependent cell-adhesion protein. May be involved in the establishment and maintenance of specific neuronal connections in the brain. The sequence is that of Protocadherin alpha-13 (PCDHA13) from Pan troglodytes (Chimpanzee).